A 376-amino-acid polypeptide reads, in one-letter code: Lipid-A-disaccharide synthase (376 aa).

It belongs to the LpxB family.

It catalyses the reaction a lipid X + a UDP-2-N,3-O-bis[(3R)-3-hydroxyacyl]-alpha-D-glucosamine = a lipid A disaccharide + UDP + H(+). It participates in bacterial outer membrane biogenesis; LPS lipid A biosynthesis. In terms of biological role, condensation of UDP-2,3-diacylglucosamine and 2,3-diacylglucosamine-1-phosphate to form lipid A disaccharide, a precursor of lipid A, a phosphorylated glycolipid that anchors the lipopolysaccharide to the outer membrane of the cell. In Coxiella burnetii (strain CbuK_Q154) (Coxiella burnetii (strain Q154)), this protein is Lipid-A-disaccharide synthase.